Here is a 401-residue protein sequence, read N- to C-terminus: Argininosuccinate synthase (401 aa).

Residues 11–19 (AYSGGLDTS) and Ala-38 contribute to the ATP site. L-citrulline-binding residues include Tyr-89 and Ser-94. Gly-119 is a binding site for ATP. Residues Thr-121, Asn-125, and Asp-126 each contribute to the L-aspartate site. Residue Asn-125 coordinates L-citrulline. Arg-129, Ser-180, Ser-189, Glu-265, and Tyr-277 together coordinate L-citrulline.

Belongs to the argininosuccinate synthase family. Type 1 subfamily. Homotetramer.

Its subcellular location is the cytoplasm. It catalyses the reaction L-citrulline + L-aspartate + ATP = 2-(N(omega)-L-arginino)succinate + AMP + diphosphate + H(+). Its pathway is amino-acid biosynthesis; L-arginine biosynthesis; L-arginine from L-ornithine and carbamoyl phosphate: step 2/3. This is Argininosuccinate synthase from Syntrophus aciditrophicus (strain SB).